A 286-amino-acid polypeptide reads, in one-letter code: Polyamine aminopropyltransferase (286 aa).

Residues 9 to 242 enclose the PABS domain; the sequence is NGWIDEHHQG…GWWSWTFAAI (234 aa). Gln36 serves as a coordination point for S-methyl-5'-thioadenosine. Spermidine is bound by residues His67 and Asp91. Residues Glu111 and 143-144 contribute to the S-methyl-5'-thioadenosine site; that span reads NG. Asp162 serves as the catalytic Proton acceptor. Pro169 contributes to the S-methyl-5'-thioadenosine binding site.

This sequence belongs to the spermidine/spermine synthase family. Homodimer or homotetramer.

It localises to the cytoplasm. It catalyses the reaction S-adenosyl 3-(methylsulfanyl)propylamine + putrescine = S-methyl-5'-thioadenosine + spermidine + H(+). The protein operates within amine and polyamine biosynthesis; spermidine biosynthesis; spermidine from putrescine: step 1/1. Its function is as follows. Catalyzes the irreversible transfer of a propylamine group from the amino donor S-adenosylmethioninamine (decarboxy-AdoMet) to putrescine (1,4-diaminobutane) to yield spermidine. In Prochlorococcus marinus (strain MIT 9313), this protein is Polyamine aminopropyltransferase.